The sequence spans 348 residues: MANITAALVKELREKTGAGVMDAKKALVEVEGDMGKAIELLREKGMAKAAKKADRVAAEGLTGVYVDGNVAAIVEVNAETDFVAKNAQFVDLVNETAKVIAEGKPANNEEALALKTAAGDTLEAAYVNATATIGEKISFRRFALVEKADKQVFGAYQHNGGKIGVITVLEGENTDEALAKQLAMHVAAMNPSVLSYKELSEEFIHDELAQMNHKIEQDNESRAMVDKPALPLLKYGSKGQLTDEVVAQAEEDIKAELKAEGKPEKIWDKIIPGKMARFFLDNTKVDQQYTLLSQVYIMDDSKTVEAYMESVNGKVISFVRFEVGEGIEKAANDFENEVAATMAAALNK.

The segment at 80–83 (TDFV) is involved in Mg(2+) ion dislocation from EF-Tu.

It belongs to the EF-Ts family.

The protein resides in the cytoplasm. Its function is as follows. Associates with the EF-Tu.GDP complex and induces the exchange of GDP to GTP. It remains bound to the aminoacyl-tRNA.EF-Tu.GTP complex up to the GTP hydrolysis stage on the ribosome. The chain is Elongation factor Ts from Streptococcus mutans serotype c (strain ATCC 700610 / UA159).